The following is a 337-amino-acid chain: Glucokinase (337 aa).

11–16 is a binding site for ATP; that stretch reads ADIGGT.

The protein belongs to the bacterial glucokinase family.

It is found in the cytoplasm. The catalysed reaction is D-glucose + ATP = D-glucose 6-phosphate + ADP + H(+). The protein is Glucokinase of Xylella fastidiosa (strain M23).